Reading from the N-terminus, the 186-residue chain is GTP cyclohydrolase 1 1 (186 aa).

The protein belongs to the GTP cyclohydrolase I family. In terms of assembly, homomer.

The enzyme catalyses GTP + H2O = 7,8-dihydroneopterin 3'-triphosphate + formate + H(+). It participates in cofactor biosynthesis; 7,8-dihydroneopterin triphosphate biosynthesis; 7,8-dihydroneopterin triphosphate from GTP: step 1/1. In Pseudomonas aeruginosa (strain ATCC 15692 / DSM 22644 / CIP 104116 / JCM 14847 / LMG 12228 / 1C / PRS 101 / PAO1), this protein is GTP cyclohydrolase 1 1 (folE1).